The following is a 420-amino-acid chain: Na(+)/H(+) antiporter NhaA (420 aa).

The next 11 helical transmembrane spans lie at 4–24 (VWNF…IALI), 70–90 (DLLM…AVIL), 104–124 (LVAT…IAYF), 132–152 (AVAN…YLVG), 165–185 (FLLL…AIFY), 192–212 (PAWL…ANWL), 233–250 (LSFW…YGFM), 299–319 (VEII…SAMG), 323–343 (WLVL…FGWL), 361–381 (LVVI…VASV), and 395–415 (GALF…LTQV).

It belongs to the NhaA Na(+)/H(+) (TC 2.A.33) antiporter family.

Its subcellular location is the cell inner membrane. It catalyses the reaction Na(+)(in) + 2 H(+)(out) = Na(+)(out) + 2 H(+)(in). Its function is as follows. Na(+)/H(+) antiporter that extrudes sodium in exchange for external protons. The chain is Na(+)/H(+) antiporter NhaA from Jannaschia sp. (strain CCS1).